The chain runs to 146 residues: Hemoglobin subunit beta (146 aa).

Positions 2–146 constitute a Globin domain; that stretch reads FLTAEEKGLV…VANALAHKYH (145 aa). S44 bears the Phosphoserine mark. An N6-acetyllysine modification is found at K59. H63 is a heme b binding site. At K82 the chain carries N6-acetyllysine. A heme b-binding site is contributed by H92. At C93 the chain carries S-nitrosocysteine. Residue K144 is modified to N6-acetyllysine.

This sequence belongs to the globin family. Heterotetramer of two alpha chains and two beta chains. In terms of tissue distribution, red blood cells.

Functionally, involved in oxygen transport from the lung to the various peripheral tissues. The chain is Hemoglobin subunit beta (HBB) from Lynx lynx (Eurasian lynx).